Consider the following 883-residue polypeptide: Alanine--tRNA ligase (883 aa).

Zn(2+)-binding residues include His-560, His-564, Cys-665, and His-669.

Belongs to the class-II aminoacyl-tRNA synthetase family. Zn(2+) is required as a cofactor.

The protein localises to the cytoplasm. It carries out the reaction tRNA(Ala) + L-alanine + ATP = L-alanyl-tRNA(Ala) + AMP + diphosphate. Catalyzes the attachment of alanine to tRNA(Ala) in a two-step reaction: alanine is first activated by ATP to form Ala-AMP and then transferred to the acceptor end of tRNA(Ala). Also edits incorrectly charged Ser-tRNA(Ala) and Gly-tRNA(Ala) via its editing domain. The protein is Alanine--tRNA ligase of Mesomycoplasma hyopneumoniae (strain J / ATCC 25934 / NCTC 10110) (Mycoplasma hyopneumoniae).